We begin with the raw amino-acid sequence, 489 residues long: MSQTESTKGVKITNYAAIKNAPLPADGPGAKNFSNWLLLGLLTGVPLFVTRKFHGGLKTFIFFFILFAIPILMAYWTVLSSYSPRLNEKVQFPNRGVEHYLKFHDDQLAARYQGQNKIPMETFHELYFEGKVSFKGDALDALEYRHDWASFRFTLSLFRFFLLGMIPEVIMHSRSQDEEQVRDHYDRGDDFYSWFLGDRMVYTSGLISDVNKDESLEELQDNKLKTVCEKIQLKEGEYLLDLGCGWGTLAAFASSQYGAKVTGITLGKNQTKYGNDKIASFGVDEKQSRILCHDYRDTPLPKDENGNTTKYDKITCLEMAEHVGVRKFRSFLQQVYDMLDDDGVFFLQYAGLRKSWQYEDLIWGLFMNKYIFPGADASTPLDFVVSALEATGFETVSIDNIGVHYSATLYRWYKNWLSNRDNVVNKYGIKWFKIWEYFLASSTIISRQGSATCYQIVLRKNLNSYDRAGYISTQEGLQGPISRKTDWVK.

Transmembrane regions (helical) follow at residues 29 to 49 and 59 to 79; these read GAKN…PLFV and TFIF…WTVL. Residues 202 to 203, 239 to 247, 265 to 270, and 295 to 296 each bind S-adenosyl-L-methionine; these read YT, LLDLGCGWG, TLGKNQ, and YR.

Belongs to the CFA/CMAS family.

The protein localises to the membrane. It catalyses the reaction a (4E,8E)-4-sphinga-4,8-dienine ceramide + S-adenosyl-L-methionine = a 9-methyl-(4E,8E)-sphinga-4,8-dienine ceramide + S-adenosyl-L-homocysteine + H(+). It functions in the pathway lipid metabolism; sphingolipid metabolism. Its function is as follows. Catalyzes methylation of the sphingoid base component of glucosylceramides (GluCers) at the C9-position. Sphingolipid C9-methylation requires 4,8-desaturated ceramides as substrates. Glucosylceramides play important roles in growth, differentiation and pathogenicity. The methyl group at the C9-position distinguishes fungal glucosylceramides from those of plants and animals, and may thus play a role in host-pathogen interactions enabling the host to recognize the fungal attack and initiate specific defense responses. The chain is Sphingolipid C9-methyltransferase from Komagataella phaffii (strain GS115 / ATCC 20864) (Yeast).